The primary structure comprises 354 residues: UDP-N-acetylglucosamine--N-acetylmuramyl-(pentapeptide) pyrophosphoryl-undecaprenol N-acetylglucosamine transferase (354 aa).

UDP-N-acetyl-alpha-D-glucosamine contacts are provided by residues 11-13 (TAG), Arg164, Ser194, and Gln289.

This sequence belongs to the glycosyltransferase 28 family. MurG subfamily.

Its subcellular location is the cell membrane. It catalyses the reaction di-trans,octa-cis-undecaprenyl diphospho-N-acetyl-alpha-D-muramoyl-L-alanyl-D-glutamyl-meso-2,6-diaminopimeloyl-D-alanyl-D-alanine + UDP-N-acetyl-alpha-D-glucosamine = di-trans,octa-cis-undecaprenyl diphospho-[N-acetyl-alpha-D-glucosaminyl-(1-&gt;4)]-N-acetyl-alpha-D-muramoyl-L-alanyl-D-glutamyl-meso-2,6-diaminopimeloyl-D-alanyl-D-alanine + UDP + H(+). It functions in the pathway cell wall biogenesis; peptidoglycan biosynthesis. Cell wall formation. Catalyzes the transfer of a GlcNAc subunit on undecaprenyl-pyrophosphoryl-MurNAc-pentapeptide (lipid intermediate I) to form undecaprenyl-pyrophosphoryl-MurNAc-(pentapeptide)GlcNAc (lipid intermediate II). This chain is UDP-N-acetylglucosamine--N-acetylmuramyl-(pentapeptide) pyrophosphoryl-undecaprenol N-acetylglucosamine transferase, found in Clostridium botulinum (strain Loch Maree / Type A3).